We begin with the raw amino-acid sequence, 549 residues long: Hydroxylamine reductase (549 aa).

Positions 5, 8, 17, and 23 each coordinate [4Fe-4S] cluster. His243, Glu267, Cys311, Cys403, Cys431, Cys456, Glu491, and Lys493 together coordinate hybrid [4Fe-2O-2S] cluster. Cys403 is modified (cysteine persulfide).

This sequence belongs to the HCP family. [4Fe-4S] cluster serves as cofactor. Hybrid [4Fe-2O-2S] cluster is required as a cofactor.

The protein resides in the cytoplasm. It catalyses the reaction A + NH4(+) + H2O = hydroxylamine + AH2 + H(+). In terms of biological role, catalyzes the reduction of hydroxylamine to form NH(3) and H(2)O. The polypeptide is Hydroxylamine reductase (Desulfitobacterium hafniense (strain Y51)).